A 344-amino-acid polypeptide reads, in one-letter code: MNTRTDVTNDNIDKNPTKRGDRNIPGRNERFNDQNRFNNDRPQPNQPPRQDNKYREENGDFINIRLCAYEKEYCNDGYLSPAYYMLKQVDDEEMSCWSELSSLVRSRKAVGFPLLKAAKRISHGSMLYFEQFKNSKVVRLTPQVKCLNDTVIFQTVVILYSMYKRGIYSNEFCFNLVSIPRTNIVFSVNQLMFNICTDILVVLSICGNRLYRTNLPQSCYLNFIHGHETIARRGYEHSNYFFEWLIKNHISLLTKQTMDILKVKKKYATGAPVNRLLEPGTLVYVPKEDYYFIGISLTDVSISDNVRVLFSTDGIVLEIEDFNIKHLFMAGEMFVRSQSSTIIV.

Over residues 1 to 10 (MNTRTDVTND) the composition is skewed to polar residues. The interval 1 to 55 (MNTRTDVTNDNIDKNPTKRGDRNIPGRNERFNDQNRFNNDRPQPNQPPRQDNKYR) is disordered. The span at 11–33 (NIDKNPTKRGDRNIPGRNERFND) shows a compositional bias: basic and acidic residues. Residues 34 to 43 (QNRFNNDRPQ) are compositionally biased toward low complexity.

This sequence belongs to the orthopoxvirus OPG097 family.

The protein resides in the virion. Its subcellular location is the host cytoplasm. Functionally, might be required to be present in the virion for transcription of early genes after primo infection. This Cynomys gunnisoni (Gunnison's prairie dog) protein is Protein OPG097 (OPG097).